A 263-amino-acid chain; its full sequence is MSFLHAILLGLLQGLTEFLPVSSSGHLAIAQHFLPGFSQPGVLFDVLLHAGTMAAVLVYFRYDCRHLALAYFRPHEEAHQYRRLLRLLIIATVPTAIIGLSFKDFFVGAFHNLPLISLMLVVTGGLLFFSERLRKNGRSQGHLQHWDALIAGVAQAGAIMPGISRSGSTISVLLFKGVSGETAARFSFLMALPAVFGATLVSLLEWPAGVSAEIPVYAAGAVMAFLSGLASIHLLMGVVRRRRLYAFAVYCWLMGGMFFAISS.

Transmembrane regions (helical) follow at residues 40–60 (PGVL…LVYF), 87–107 (LLII…DFFV), 109–129 (AFHN…LLFF), 186–206 (FSFL…LLEW), 219–239 (AGAV…MGVV), and 243–263 (RLYA…AISS).

This sequence belongs to the UppP family.

It localises to the cell inner membrane. The catalysed reaction is di-trans,octa-cis-undecaprenyl diphosphate + H2O = di-trans,octa-cis-undecaprenyl phosphate + phosphate + H(+). Catalyzes the dephosphorylation of undecaprenyl diphosphate (UPP). Confers resistance to bacitracin. This Syntrophotalea carbinolica (strain DSM 2380 / NBRC 103641 / GraBd1) (Pelobacter carbinolicus) protein is Undecaprenyl-diphosphatase.